Consider the following 466-residue polypeptide: Asparagine--tRNA ligase (466 aa).

The protein belongs to the class-II aminoacyl-tRNA synthetase family. Homodimer.

Its subcellular location is the cytoplasm. It carries out the reaction tRNA(Asn) + L-asparagine + ATP = L-asparaginyl-tRNA(Asn) + AMP + diphosphate + H(+). This chain is Asparagine--tRNA ligase, found in Psychromonas ingrahamii (strain DSM 17664 / CCUG 51855 / 37).